The chain runs to 186 residues: Agglutinin isolectin 3 (186 aa).

A Pyrrolidone carboxylic acid modification is found at glutamine 1. Chitin-binding type-1 domains lie at 1–42, 43–85, 86–128, and 129–171; these read QRCG…ACWT, SKRC…PCRA, DIKC…ACST, and DKPC…GCDG. 16 disulfide bridges follow: cysteine 3/cysteine 18, cysteine 12/cysteine 24, cysteine 17/cysteine 31, cysteine 35/cysteine 40, cysteine 46/cysteine 61, cysteine 55/cysteine 67, cysteine 60/cysteine 74, cysteine 78/cysteine 83, cysteine 89/cysteine 104, cysteine 98/cysteine 110, cysteine 103/cysteine 117, cysteine 121/cysteine 126, cysteine 132/cysteine 147, cysteine 141/cysteine 153, cysteine 146/cysteine 160, and cysteine 164/cysteine 169. Position 10–12 (10–12) interacts with substrate; the sequence is MEC. Substrate is bound at residue 62–73; the sequence is SQYGHCGFGAEY. Residue 114 to 115 coordinates substrate; it reads SE. Positions 172 to 186 are excised as a propeptide; that stretch reads VFAEAIATNSTLLAE. An N-linked (GlcNAc...) asparagine glycan is attached at asparagine 180.

In terms of assembly, homodimer, u-shaped.

In terms of biological role, N-acetyl-D-glucosamine / N-acetyl-D-neuraminic acid binding lectin. The protein is Agglutinin isolectin 3 of Triticum aestivum (Wheat).